The following is a 676-amino-acid chain: Beta-taxilin (676 aa).

Disordered stretches follow at residues 1–55 and 71–131; these read MEND…DISE and AASL…EQKL. Composition is skewed to polar residues over residues 8–25 and 34–45; these read EKQQ…QGQS and QPLSPTNQTSAQ. Basic and acidic residues predominate over residues 75–92; sequence VEKEGTTAETDKPEKEDV. Over residues 93–105 the composition is skewed to acidic residues; the sequence is GSMEDAECEDVNE. Over residues 106 to 131 the composition is skewed to basic and acidic residues; sequence ESEKDKPAPGDASRAKEPSASKEQKL. A coiled-coil region spans residues 157–461; it reads EEKLDLLFKK…LYRKIKQAQL (305 aa). The disordered stretch occupies residues 464–486; that stretch reads EVNGNDILEEDDDANTNPSSSEQ.

It belongs to the taxilin family. As to expression, specifically expressed in skeletal and cardiac muscle.

The protein localises to the cytoplasm. Functionally, promotes neurite-outgrowth. May be involved in intracellular vesicle traffic. The protein is Beta-taxilin (TXLNB) of Gallus gallus (Chicken).